The primary structure comprises 452 residues: Interferon-induced protein 44-like (452 aa).

A TLDc domain is found at 1-159; sequence MEVTTRLTWN…YLECEVFRVE (159 aa).

Belongs to the IFI44 family. As to quaternary structure, interacts with FKBP5; this interaction modulates IKBKB and IKBKE kinase activities.

The protein localises to the cytoplasm. Its function is as follows. Type I interferon-stimulated gene (ISG) that plays a critical role in antiviral and antibacterial activity. During bacterial infection, promotes macrophage differentiation and facilitates inflammatory cytokine secretion. Plays a role in the control of respiratory syncytial virus/RSV infection, reducing the ability of the virus to replicate. Exhibits a low antiviral activity against hepatitis C virus. Also acts as a feedback regulator of IFN responses by negatively regulating IKBKB and IKBKE kinase activities through interaction with FKBP5. In Homo sapiens (Human), this protein is Interferon-induced protein 44-like (IFI44L).